The following is a 511-amino-acid chain: Maturase K (511 aa).

This sequence belongs to the intron maturase 2 family. MatK subfamily.

The protein resides in the plastid. The protein localises to the chloroplast. Functionally, usually encoded in the trnK tRNA gene intron. Probably assists in splicing its own and other chloroplast group II introns. The protein is Maturase K of Maihuenia poeppigii (Hardy cactus).